The primary structure comprises 159 residues: uncharacterized protein (159 aa).

Transmembrane regions (helical) follow at residues 17 to 37 (FFFF…NLSS), 44 to 64 (WLIV…PLPI), and 67 to 87 (FSGA…DLIA).

It localises to the membrane. This is an uncharacterized protein from Saccharomyces cerevisiae (strain ATCC 204508 / S288c) (Baker's yeast).